A 646-amino-acid polypeptide reads, in one-letter code: Macrolide export ATP-binding/permease protein MacB (646 aa).

The ABC transporter domain maps to 7–245; sequence IRLEDICKTF…EATLQPHEEI (239 aa). ATP is bound at residue 43–50; sequence GASGSGKS. Helical transmembrane passes span 274–294, 528–548, 572–592, and 609–629; these read VLTL…LAIG, VAAI…LVSV, FIIE…ILGL, and FGPV…FGFL.

The protein belongs to the ABC transporter superfamily. Macrolide exporter (TC 3.A.1.122) family. As to quaternary structure, homodimer.

The protein resides in the cell inner membrane. Non-canonical ABC transporter that contains transmembrane domains (TMD), which form a pore in the inner membrane, and an ATP-binding domain (NBD), which is responsible for energy generation. Confers resistance against macrolides. This is Macrolide export ATP-binding/permease protein MacB from Brucella abortus (strain 2308).